The following is a 273-amino-acid chain: Large ribosomal subunit protein uL2cz/uL2cy (273 aa).

2 disordered regions span residues 1–24 (MAIHLYKTSTPSTRKGAVDSQAKS) and 224–254 (NPVDHPHGGGEGRAPIGRKKPTTPWGYPALG).

Belongs to the universal ribosomal protein uL2 family. As to quaternary structure, part of the 50S ribosomal subunit.

Its subcellular location is the plastid. It is found in the chloroplast. The protein is Large ribosomal subunit protein uL2cz/uL2cy (rpl2-A) of Nymphaea alba (White water-lily).